The chain runs to 87 residues: U3-theraphotoxin-Hhn1d (87 aa).

The N-terminal stretch at Met1–Ala24 is a signal peptide. Positions Ser25–Arg52 are excised as a propeptide. 3 disulfides stabilise this stretch: Cys54–Cys67, Cys61–Cys72, and Cys66–Cys79.

Belongs to the neurotoxin 10 (Hwtx-1) family. 51 (Hntx-8) subfamily. Hntx-8 sub-subfamily. In terms of tissue distribution, expressed by the venom gland.

Its subcellular location is the secreted. Ion channel inhibitor. The chain is U3-theraphotoxin-Hhn1d from Cyriopagopus hainanus (Chinese bird spider).